We begin with the raw amino-acid sequence, 117 residues long: Ig heavy chain V region 23 (117 aa).

The signal sequence occupies residues 1 to 19; the sequence is MGWSCIILFLVAAANGVHS. The interval 20 to 49 is framework-1; the sequence is QVQLQQPGTELVKPGASVKLSCKASGYTFT. C41 and C115 form a disulfide bridge. Residues 50–54 are complementarity-determining-1; it reads SYWMH. Residues 55–68 form a framework-2 region; sequence WVKQRPGQGLEWIG. The interval 69 to 85 is complementarity-determining-2; that stretch reads NINPGNGGTNYNEKFKS. The interval 86–117 is framework-3; sequence KVTLTVDKSSSTAYTQLSSLTSEDSAVYYCAR.

In Mus musculus (Mouse), this protein is Ig heavy chain V region 23.